The following is a 433-amino-acid chain: E1B 55 kDa protein (433 aa).

This sequence belongs to the adenoviridae E1B 55 kDa protein family. As to quaternary structure, interacts with host PML-4 and PML-5; this interaction promotes efficient subnuclear targeting of E1B-55K to PML nuclear bodies. Interacts with E4-ORF3 protein. Interacts with E4-ORF6 protein.

The protein resides in the host nucleus. It localises to the host cytoplasm. Its function is as follows. Plays a major role to prevent cellular inhibition of viral genome replication. Assembles an SCF-like E3 ubiquitin ligase complex based on the cellular proteins ELOB, ELOC, CUL5 and RBX1, in cooperation with viral E4orf6. This viral RING-type ligase ubiquitinates cellular substrates and targets them to proteasomal degradation: TP53/p53, LIG4, MRE11-RAD50-NBS1 (MRN) complex, ITGA3, DAXX and BLM. E1B-55K probably acts as the substrate-specific adapter of the SCF-like E3 ubiquitin ligase complex. Degradation of host TP53/p53 activity is essential for preventing E1A-induced TP53 accumulation that would otherwise lead to cell apoptosis and growth arrest. E1B-55K also inactivates TP53 transcription-factor activity by binding its transactivation domain. E1B-55K also functions as a SUMO1 E3 ligase for TP53 which causes the latter to be sequestered in promyelocytic leukemia (PML) nuclear bodies thereby contributing to maximal inhibition of TP53 function. The chain is E1B 55 kDa protein from Murine adenovirus A serotype 1 (MAdV-1).